The following is a 469-amino-acid chain: Uronate isomerase (469 aa).

It belongs to the metallo-dependent hydrolases superfamily. Uronate isomerase family.

The catalysed reaction is D-glucuronate = D-fructuronate. It carries out the reaction aldehydo-D-galacturonate = keto-D-tagaturonate. The protein operates within carbohydrate metabolism; pentose and glucuronate interconversion. This is Uronate isomerase from Mesorhizobium japonicum (strain LMG 29417 / CECT 9101 / MAFF 303099) (Mesorhizobium loti (strain MAFF 303099)).